We begin with the raw amino-acid sequence, 372 residues long: MKAYIYLENDIFLSAKAFGKSGTFFGELVFNTSLTGYQEIISDPSYAGQFIVFSMPEIGIVGTNENDNESKEIFASGVLMRELSSSFSNFRAKESLQDYLEKHGKIGIYELDTRYLVKMIRNNGNLRAVISTEISNKEDLKIALEKSAKIDEVNFVKEVSTKKNYSHKQGVWNASFQKFNDAKRSEKKVAVIDYGVKTNILNELVEVGFEVEVYPYNVKADELITLYKKGEIQGVFLSNGPGEPRILKQEIAEIKKLAEAKIPMLGICLGHQLLSNAFGYETYKMKFGQHGANHPVINLDTKTVEITAQNHNYNVPEELAQVAHITHRNLFGDNVEGVRYKDYPIISVQHHPESSSGPHESKYIFKEFMNLM.

Residues 1–184 form a CPSase region; the sequence is MKAYIYLEND…SFQKFNDAKR (184 aa). Residues S45, G240, and G242 each contribute to the L-glutamine site. In terms of domain architecture, Glutamine amidotransferase type-1 spans 188 to 372; that stretch reads KVAVIDYGVK…YIFKEFMNLM (185 aa). The Nucleophile role is filled by C268. 4 residues coordinate L-glutamine: L269, Q272, N310, and Y313. Active-site residues include H351 and E353.

This sequence belongs to the CarA family. In terms of assembly, composed of two chains; the small (or glutamine) chain promotes the hydrolysis of glutamine to ammonia, which is used by the large (or ammonia) chain to synthesize carbamoyl phosphate. Tetramer of heterodimers (alpha,beta)4.

The catalysed reaction is hydrogencarbonate + L-glutamine + 2 ATP + H2O = carbamoyl phosphate + L-glutamate + 2 ADP + phosphate + 2 H(+). It catalyses the reaction L-glutamine + H2O = L-glutamate + NH4(+). It participates in amino-acid biosynthesis; L-arginine biosynthesis; carbamoyl phosphate from bicarbonate: step 1/1. Its pathway is pyrimidine metabolism; UMP biosynthesis via de novo pathway; (S)-dihydroorotate from bicarbonate: step 1/3. Functionally, small subunit of the glutamine-dependent carbamoyl phosphate synthetase (CPSase). CPSase catalyzes the formation of carbamoyl phosphate from the ammonia moiety of glutamine, carbonate, and phosphate donated by ATP, constituting the first step of 2 biosynthetic pathways, one leading to arginine and/or urea and the other to pyrimidine nucleotides. The small subunit (glutamine amidotransferase) binds and cleaves glutamine to supply the large subunit with the substrate ammonia. This chain is Carbamoyl phosphate synthase small chain, found in Campylobacter jejuni subsp. jejuni serotype O:2 (strain ATCC 700819 / NCTC 11168).